Here is a 552-residue protein sequence, read N- to C-terminus: MNQAMATPLSLSCCSPTLTRSTLFFTKTFPFSRSFSTPLPLSTKTLISLSPPHRTFAVRAESQNGADPARQYDFDLFTIGAGSGGVRASRFASNFGASSAVCELPFSTISSDTTGGVGGTCVIRGCVPKKLLVYASKFSHEFEESNGFGWRYDSEPKHDWSSLIANKNAELQRLTGIYKNTLKNAGVKLIEGRGKIVDAHTVDVDGKLYSAKHILVSVGGRPFIPDIPGKEYAIDSDAALDLPSKPQKIAIVGGGYIALEFAGIFNGLKSEVHVFIRQKKVLRGFDEEIRDFVAENMALRGIEFHTEESPVAITKAADGSLSLKTNKGTEEGFSHIMFATGRSPNTKDLGLESVGVKVAKDGSIEVDEYSQTSVPSIWAIGDATNRVNLTPVALMEGVALAKTLFQNEPTKPDYRAIPSAVFSQPPIGGVGLTEEQAAEQYGDIDVFTANFRPMKATLSGLPDRVFMKLIVSAETNVVLGLHMCGEDAAEIAQGFAVGIKAGLTKADFDATVGIHPTAAEEFVTMRTPTRKVRKNQASQGKSDSKAKAVAGS.

Residues 1–60 constitute a chloroplast and mitochondrion transit peptide; sequence MNQAMATPLSLSCCSPTLTRSTLFFTKTFPFSRSFSTPLPLSTKTLISLSPPHRTFAVRA. 6 residues coordinate FAD: Ser-83, Gly-84, Glu-103, Thr-120, Cys-121, and Lys-129. Residue Ser-83 participates in glutathione binding. Cys-121 and Cys-126 are oxidised to a cystine. Position 178 (Tyr-178) interacts with glutathione. Gly-194 serves as a coordination point for FAD. The NADP(+) site is built by Gly-254, Ile-257, Glu-260, Arg-277, Arg-283, and Gly-341. The FAD site is built by Asp-382 and Thr-390. Ala-420 is an NADP(+) binding site. His-515 is a binding site for FAD. The active-site Proton acceptor is His-515. A disordered region spans residues 527-552; the sequence is TPTRKVRKNQASQGKSDSKAKAVAGS.

This sequence belongs to the class-I pyridine nucleotide-disulfide oxidoreductase family. Homodimer. It depends on FAD as a cofactor.

It localises to the plastid. Its subcellular location is the chloroplast. It is found in the mitochondrion. The catalysed reaction is 2 glutathione + NADP(+) = glutathione disulfide + NADPH + H(+). Functionally, catalyzes the reduction of glutathione disulfide (GSSG) to reduced glutathione (GSH). Maintains high levels of GSH in the chloroplast. This Pisum sativum (Garden pea) protein is Glutathione reductase, chloroplastic/mitochondrial (GR).